Here is a 670-residue protein sequence, read N- to C-terminus: UvrABC system protein B (670 aa).

The region spanning 26–183 (EGLEDGLAHQ…RRLAELQYSR (158 aa)) is the Helicase ATP-binding domain. 39–46 (GVTGSGKT) lines the ATP pocket. A Beta-hairpin motif is present at residues 92 to 115 (YYDYYQPEAYVPSSDTFIEKDASV). Residues 431 to 597 (QVDDLLSEIR…GLNKKISDIL (167 aa)) form the Helicase C-terminal domain. Positions 630 to 665 (ELKIRELESKMLTHAQNLEFEEAAALRDELQALRAQ) constitute a UVR domain.

This sequence belongs to the UvrB family. Forms a heterotetramer with UvrA during the search for lesions. Interacts with UvrC in an incision complex.

It localises to the cytoplasm. Functionally, the UvrABC repair system catalyzes the recognition and processing of DNA lesions. A damage recognition complex composed of 2 UvrA and 2 UvrB subunits scans DNA for abnormalities. Upon binding of the UvrA(2)B(2) complex to a putative damaged site, the DNA wraps around one UvrB monomer. DNA wrap is dependent on ATP binding by UvrB and probably causes local melting of the DNA helix, facilitating insertion of UvrB beta-hairpin between the DNA strands. Then UvrB probes one DNA strand for the presence of a lesion. If a lesion is found the UvrA subunits dissociate and the UvrB-DNA preincision complex is formed. This complex is subsequently bound by UvrC and the second UvrB is released. If no lesion is found, the DNA wraps around the other UvrB subunit that will check the other stand for damage. This is UvrABC system protein B from Pectobacterium carotovorum subsp. carotovorum (strain PC1).